Consider the following 348-residue polypeptide: N-acetyl-gamma-glutamyl-phosphate reductase (348 aa).

C151 is an active-site residue.

This sequence belongs to the NAGSA dehydrogenase family. Type 1 subfamily.

The protein resides in the cytoplasm. The enzyme catalyses N-acetyl-L-glutamate 5-semialdehyde + phosphate + NADP(+) = N-acetyl-L-glutamyl 5-phosphate + NADPH + H(+). Its pathway is amino-acid biosynthesis; L-arginine biosynthesis; N(2)-acetyl-L-ornithine from L-glutamate: step 3/4. Catalyzes the NADPH-dependent reduction of N-acetyl-5-glutamyl phosphate to yield N-acetyl-L-glutamate 5-semialdehyde. This Lachnospira eligens (strain ATCC 27750 / DSM 3376 / VPI C15-48 / C15-B4) (Eubacterium eligens) protein is N-acetyl-gamma-glutamyl-phosphate reductase.